We begin with the raw amino-acid sequence, 244 residues long: Large ribosomal subunit protein uL2 (244 aa).

Composition is skewed to basic residues over residues 1 to 12 (MGKRPLVRRRGR) and 234 to 244 (KTGRARIKERK). Disordered regions lie at residues 1 to 30 (MGKR…TKAN) and 203 to 244 (HGGG…KERK).

It belongs to the universal ribosomal protein uL2 family. As to quaternary structure, part of the 50S ribosomal subunit. Forms a bridge to the 30S subunit in the 70S ribosome.

Functionally, one of the primary rRNA binding proteins. Required for association of the 30S and 50S subunits to form the 70S ribosome, for tRNA binding and peptide bond formation. It has been suggested to have peptidyltransferase activity; this is somewhat controversial. Makes several contacts with the 16S rRNA in the 70S ribosome. This is Large ribosomal subunit protein uL2 from Nitrosopumilus maritimus (strain SCM1).